The following is a 400-amino-acid chain: tRNA-specific 2-thiouridylase MnmA (400 aa).

Residues Ala19 to Ser26 and Leu45 each bind ATP. Catalysis depends on Cys113, which acts as the Nucleophile. Cys113 and Cys210 are oxidised to a cystine. Gly137 contacts ATP. An interaction with tRNA region spans residues Arg160 to Gln162. The active-site Cysteine persulfide intermediate is Cys210.

It belongs to the MnmA/TRMU family.

The protein resides in the cytoplasm. The enzyme catalyses S-sulfanyl-L-cysteinyl-[protein] + uridine(34) in tRNA + AH2 + ATP = 2-thiouridine(34) in tRNA + L-cysteinyl-[protein] + A + AMP + diphosphate + H(+). Catalyzes the 2-thiolation of uridine at the wobble position (U34) of tRNA, leading to the formation of s(2)U34. The sequence is that of tRNA-specific 2-thiouridylase MnmA from Rhodopseudomonas palustris (strain BisA53).